The following is a 47-amino-acid chain: GVPCRCDSDGPSVHGNTLSGTVWVGSCASGWHKCNTEHNIFHECCKE.

A Hydroxyproline modification is found at P3. Cystine bridges form between C4–C44, C6–C34, and C27–C45.

Belongs to the sea anemone sodium channel inhibitory toxin family. Type I subfamily.

Its subcellular location is the secreted. The protein localises to the nematocyst. Its function is as follows. Binds voltage-dependently at site 3 of sodium channels (Nav) and inhibits the inactivation, thereby blocking neuronal transmission. The protein is Delta-actitoxin-Cgg1b of Condylactis gigantea (Giant Caribbean anemone).